The sequence spans 194 residues: RNA pyrophosphohydrolase (194 aa).

One can recognise a Nudix hydrolase domain in the interval 6 to 149 (GFRPNVGIIL…KRDVYQRALQ (144 aa)). Residues 38 to 59 (GGIKFGETPEQAMYRELEEEVG) carry the Nudix box motif. Residues 158–194 (PTQHVPPQHNTARYLRQTHASRKPDEPSTEKTKPDNE) form a disordered region. A compositionally biased stretch (basic and acidic residues) spans 179–194 (RKPDEPSTEKTKPDNE).

The protein belongs to the Nudix hydrolase family. RppH subfamily. A divalent metal cation is required as a cofactor.

Its function is as follows. Accelerates the degradation of transcripts by removing pyrophosphate from the 5'-end of triphosphorylated RNA, leading to a more labile monophosphorylated state that can stimulate subsequent ribonuclease cleavage. This is RNA pyrophosphohydrolase from Janthinobacterium sp. (strain Marseille) (Minibacterium massiliensis).